Here is a 552-residue protein sequence, read N- to C-terminus: 4-coumarate--CoA ligase-like 4 (552 aa).

The segment at 182-205 (ISATTPDPARRKDRVTQDDPATLL) is disordered. Residues 189-198 (PARRKDRVTQ) are compositionally biased toward basic and acidic residues. The ATP site is built by Ser-207, Ser-208, Gly-209, Thr-210, Thr-211, and Lys-215. Tyr-256 is a binding site for (E)-4-coumaroyl-AMP. Lys-277 contributes to the CoA binding site. The interval 279–346 (ELPEMLRSIN…EKYPQVEILQ (68 aa)) is SBD1. (E)-4-coumaroyl-AMP is bound by residues Gly-324, Gln-346, Gly-347, and Thr-351. ATP contacts are provided by Gln-346, Gly-347, Thr-351, Asp-432, and Arg-447. The interval 347–411 (GYGLTESTAI…IRGPYVMKGY (65 aa)) is SBD2. 2 residues coordinate (E)-4-coumaroyl-AMP: Lys-449 and Lys-453. Positions 455 and 456 each coordinate CoA. Lys-538 lines the ATP pocket.

Belongs to the ATP-dependent AMP-binding enzyme family. The cofactor is Mg(2+).

The catalysed reaction is (E)-4-coumarate + ATP + CoA = (E)-4-coumaroyl-CoA + AMP + diphosphate. It catalyses the reaction (E)-4-coumarate + ATP + H(+) = (E)-4-coumaroyl-AMP + diphosphate. The enzyme catalyses (E)-4-coumaroyl-AMP + CoA = (E)-4-coumaroyl-CoA + AMP + H(+). Its function is as follows. Carboxylate--CoA ligase that may use 4-coumarate as substrate. Follows a two-step reaction mechanism, wherein the carboxylate substrate first undergoes adenylation by ATP, followed by a thioesterification in the presence of CoA to yield the final CoA thioester. The protein is 4-coumarate--CoA ligase-like 4 (4CLL4) of Oryza sativa subsp. japonica (Rice).